Here is a 359-residue protein sequence, read N- to C-terminus: Peptide chain release factor 1 (359 aa).

Q236 is modified (N5-methylglutamine).

The protein belongs to the prokaryotic/mitochondrial release factor family. In terms of processing, methylated by PrmC. Methylation increases the termination efficiency of RF1.

It localises to the cytoplasm. Functionally, peptide chain release factor 1 directs the termination of translation in response to the peptide chain termination codons UAG and UAA. The chain is Peptide chain release factor 1 from Lacticaseibacillus casei (strain BL23) (Lactobacillus casei).